A 139-amino-acid polypeptide reads, in one-letter code: Plastocyanin (139 aa).

A signal peptide spans 1–34 (MKLIAASLRRLSLAVLTVLLVVSSFAVFTPSASA). The Plastocyanin-like domain maps to 35–139 (ETYTVKLGSD…GMVGKITVAG (105 aa)). Positions 73, 123, 126, and 131 each coordinate Cu cation.

This sequence belongs to the plastocyanin family. The cofactor is Cu(2+).

Its subcellular location is the cellular thylakoid membrane. Its function is as follows. Participates in electron transfer between P700 and the cytochrome b6-f complex in photosystem I. This chain is Plastocyanin (petE), found in Nostoc sp. (strain PCC 7120 / SAG 25.82 / UTEX 2576).